Reading from the N-terminus, the 150-residue chain is Galectin-1 (150 aa).

The Galectin domain occupies 9-141 (NQIKLQDDFK…FSSPVTVDIH (133 aa)). Histidine 51, arginine 55, asparagine 64, and glutamate 75 together coordinate a carbohydrate.

Homotetramer. Oligomerization is required for carbohydrate binding. Most abundant in fruiting bodies. Very low levels of expression in asexual vegetative mycelia.

It localises to the secreted. The protein localises to the extracellular space. The protein resides in the extracellular matrix. Its subcellular location is the cell wall. It is found in the endomembrane system. Functionally, binds lactose. May play a role in fruiting body formation. The polypeptide is Galectin-1 (Cgl1) (Coprinopsis cinerea (strain Okayama-7 / 130 / ATCC MYA-4618 / FGSC 9003) (Inky cap fungus)).